The primary structure comprises 126 residues: Large ribosomal subunit protein bL12 (126 aa).

Residues 107–116 (EDAEKAKSQL) show a composition bias toward basic and acidic residues. Residues 107-126 (EDAEKAKSQLEEAGATVELK) form a disordered region.

This sequence belongs to the bacterial ribosomal protein bL12 family. As to quaternary structure, homodimer. Part of the ribosomal stalk of the 50S ribosomal subunit. Forms a multimeric L10(L12)X complex, where L10 forms an elongated spine to which 2 to 4 L12 dimers bind in a sequential fashion. Binds GTP-bound translation factors.

Functionally, forms part of the ribosomal stalk which helps the ribosome interact with GTP-bound translation factors. Is thus essential for accurate translation. This Bifidobacterium adolescentis (strain ATCC 15703 / DSM 20083 / NCTC 11814 / E194a) protein is Large ribosomal subunit protein bL12.